A 1262-amino-acid polypeptide reads, in one-letter code: Ras-specific guanine nucleotide-releasing factor 1 (1262 aa).

Residues 22-130 (DGTRKGYLSK…WVAAIARASY (109 aa)) form the PH 1 domain. The residue at position 71 (Ser71) is a Phosphoserine; by PLK2. The IQ domain maps to 208 to 233 (KKIKKVQSFLRGWLCRRKWKNIIQDY). The region spanning 244 to 430 (KRNQVVFSML…EELSRIMHDE (187 aa)) is the DH domain. The PH 2 domain maps to 460-588 (TFVRQGSLMQ…WTSDIIQCVD (129 aa)). Phosphoserine; by PLK2 is present on residues Ser581 and Ser617. Residues 635–749 (KVLQIRYASV…RRRKLSLNIP (115 aa)) enclose the N-terminal Ras-GEF domain. The tract at residues 714–738 (DAPKSPRASRKFSSPPPLAIGTSSP) is disordered. Ser745 is modified (phosphoserine). Ser766 carries the phosphoserine; by PLK2 modification. Positions 800–854 (EEIDVPATIPEKPGELSASRKHSSDVLKEESEDDQNHSDEDNTEVSPVKSPPTPK) are disordered. Basic and acidic residues predominate over residues 821-839 (HSSDVLKEESEDDQNHSDE). The Ras-GEF domain maps to 1027–1259 (PALEIAEQLT…YESSLLIEPK (233 aa)).

Homooligomer and heterooligomer with RASGRF2. Interacts with USP8, thereby regulating its stability. Post-translationally, phosphorylated by PLK2, leading to ubiquitination and degradation by the proteasome. Ubiquitinated and degraded following phosphorylation by PLK2. In terms of processing, phosphorylated by SRC and LCK. Phosphorylation by LCK increases its capacity to stimulate the GDP/GTP exchange on Ras, whereas its phosphorylation by SRC seems not to have an effect on stimulation activity. As to expression, brain.

Promotes the exchange of Ras-bound GDP by GTP. The sequence is that of Ras-specific guanine nucleotide-releasing factor 1 (Rasgrf1) from Mus musculus (Mouse).